We begin with the raw amino-acid sequence, 782 residues long: MRQKTLDVLDFDKIKAQVENEAVSDLGRVKAAAMTPASDYETVVFQMNETDELSQIYNKHRLPSLSGLTEVKPLIHRAKIGSILNVRELNQIKRLIQVQNQYKTFYSQLLEEEEAINYPILDERMAQLPILTDLYQEIHQKCDAYDLFDDASHELQSIRSRIHSTSQRIKQNLDRIVKSQSNQKKLSDAIITVRNDRHVIPVKAEYRQDFNGIVHDQSSSGQTLYIEPSAVVEMNNKISRLRNDEKVEVERILSVLSGEVAAEADACLIAESVMGQIDFLTAKARYGQSIKGTKPEFTEERNVYLPKAFHPLLDRATVVANTIEFAEDIQTVIITGPNTGGKTVTLKTLGLIIVMAQSGLLIPALDGSKLSVFDNVYCDIGDEQSIEQSLSTFSSHMKNIVEILKHADHNSLILFDELGAGTDPSEGAALAMSILDHVQKLGSLVMATTHYPELKAYSYNREGVMNASVEFDVNILSPTYKLLMGVPGRSNAFEISSKLGLSGNIIREAKSLIGQDEQEINNMIASLETNAKKVEDQRIELDRLLREAKQVHGDLNKKYEQYQNYEKQLMDDAKVKANQRVKAATKEADDIIKDLRHMRDEKNAEVKEHELIEKRKHLDEQYEGTDIKQNVKKQKWDEIQAGDEVKVLTYGQKGEVLEILDDDEAVVQMGIIKMKLPIADLEKKKKAQEKPAKTVSRTNRSAVKMELDLRGYRYEEAITALDQYLDQAMLSNYENVYIIHGKGTGALQKAVQQHLKKHKNVASFRTGMPSEGGFGVTVAELK.

Residue G336–T343 coordinates ATP. The Smr domain maps to L707–K782.

This sequence belongs to the DNA mismatch repair MutS family. MutS2 subfamily. Homodimer. Binds to stalled ribosomes, contacting rRNA.

Functionally, endonuclease that is involved in the suppression of homologous recombination and thus may have a key role in the control of bacterial genetic diversity. Acts as a ribosome collision sensor, splitting the ribosome into its 2 subunits. Detects stalled/collided 70S ribosomes which it binds and splits by an ATP-hydrolysis driven conformational change. Acts upstream of the ribosome quality control system (RQC), a ribosome-associated complex that mediates the extraction of incompletely synthesized nascent chains from stalled ribosomes and their subsequent degradation. Probably generates substrates for RQC. In Staphylococcus carnosus (strain TM300), this protein is Endonuclease MutS2.